We begin with the raw amino-acid sequence, 421 residues long: Testin (421 aa).

The 108-residue stretch at 92–199 folds into the PET domain; it reads MILTNPVAAK…GDVKLPREMD (108 aa). The tract at residues 133–164 is disordered; the sequence is EKQPVAGSEGAQYRKKQLAKQLPAHDQDPSKC. Over residues 155–164 the composition is skewed to basic and acidic residues; sequence PAHDQDPSKC. LIM zinc-binding domains lie at 234–297, 299–359, and 362–421; these read YSCY…CDSE, PRCA…NHAV, and QGCH…KMMS.

This sequence belongs to the prickle / espinas / testin family. In terms of assembly, interacts via LIM domain 1 with ZYX. Interacts (via LIM domain 3) with ENAH and VASP. Interacts with ALKBH4, talin, actin, alpha-actinin, GRIP1 and PXN. Interacts (via LIM domain 2) with ACTL7A (via N-terminus). Heterodimer with ACTL7A; the heterodimer interacts with ENAH to form a heterotrimer.

The protein resides in the cytoplasm. It is found in the cell junction. The protein localises to the focal adhesion. Functionally, scaffold protein that may play a role in cell adhesion, cell spreading and in the reorganization of the actin cytoskeleton. Plays a role in the regulation of cell proliferation. May act as a tumor suppressor. The chain is Testin (TES) from Canis lupus familiaris (Dog).